We begin with the raw amino-acid sequence, 201 residues long: Small ribosomal subunit protein uS4c (201 aa).

The interval 23-42 is disordered; sequence SKKPRAGSNLRNQLRPGKKS. The S4 RNA-binding domain occupies 89–151; the sequence is MRLDNILFRL…QKSKSLVQNY (63 aa).

This sequence belongs to the universal ribosomal protein uS4 family. As to quaternary structure, part of the 30S ribosomal subunit. Contacts protein S5. The interaction surface between S4 and S5 is involved in control of translational fidelity.

The protein resides in the plastid. Its subcellular location is the chloroplast. Functionally, one of the primary rRNA binding proteins, it binds directly to 16S rRNA where it nucleates assembly of the body of the 30S subunit. Its function is as follows. With S5 and S12 plays an important role in translational accuracy. The sequence is that of Small ribosomal subunit protein uS4c (rps4) from Morus indica (Mulberry).